The primary structure comprises 399 residues: Syndecan (399 aa).

The N-terminal stretch at 1–28 is a signal peptide; the sequence is MKPKQKISVEPLLLVAILIGVLVAATHA. The segment at 28-319 is disordered; the sequence is AQDQKSVKPS…TKGIDHRPNG (292 aa). Over 29–340 the chain is Extracellular; it reads QDQKSVKPSA…TSSFFSQPGI (312 aa). The span at 36-46 shows a compositional bias: low complexity; sequence PSAAAPSAAAS. O-linked (Xyl...) (glycosaminoglycan) serine glycosylation is present at Ser62. Over residues 67–77 the composition is skewed to basic and acidic residues; the sequence is GIHEDLEKDPD. O-linked (Xyl...) (glycosaminoglycan) serine glycans are attached at residues Ser79, Ser81, and Ser110. Polar residues predominate over residues 99 to 116; sequence SHNTRISQSSNSGINTAH. Residues 117-172 show a composition bias toward low complexity; that stretch reads TPTQTSSTIPTTSTSTPMPTTTPTATTPASTTTAAATQISSFANSSSTTTTTLAPT. Asn160 carries an N-linked (GlcNAc...) asparagine glycan. Acidic residues predominate over residues 191-214; it reads TESSGDGIDADAEDDDEDDGDDKD. An O-linked (Xyl...) (glycosaminoglycan) serine glycan is attached at Ser194. The span at 215-226 shows a compositional bias: basic and acidic residues; that stretch reads YDYNKELDKEID. A compositionally biased stretch (acidic residues) spans 253 to 270; the sequence is DEIDVDGGDEDDNGDSDI. The span at 299 to 309 shows a compositional bias: polar residues; the sequence is PNTNVNSQPSD. Residues 341-365 traverse the membrane as a helical segment; it reads LAAVIGGAVVGLLCAILVVMFIVYR. The Cytoplasmic segment spans residues 366–399; sequence MRKKDEGSYALDEPKRSPANNSYAKNANNREFYA. The tract at residues 373-399 is disordered; sequence SYALDEPKRSPANNSYAKNANNREFYA. Polar residues predominate over residues 383–399; sequence PANNSYAKNANNREFYA.

This sequence belongs to the syndecan proteoglycan family. In terms of tissue distribution, in 13-16 hours embryos, expressed in lymph glands, peripheral and central nervous system and basal surfaces of gut epithelia. Sdc and robo are coexpressed in domains adjacent to slit; in tracheal pits and midline glia cells.

The protein localises to the membrane. Its function is as follows. Cell surface proteoglycan that bears heparan sulfate. Required for axonal and myotube guidance, is a necessary component of slit/robo signaling and is required in the slit target cells. This chain is Syndecan (Sdc), found in Drosophila melanogaster (Fruit fly).